Reading from the N-terminus, the 291-residue chain is G1/S-specific cyclin-D1 (291 aa).

T282 carries the post-translational modification Phosphothreonine.

It belongs to the cyclin family. Cyclin D subfamily. In terms of assembly, interacts with the cdk4 and cdk6 protein kinases to form a serine/threonine kinase holoenzyme complex. The cyclin subunit imparts substrate specificity to the complex. In terms of processing, phosphorylation at Thr-282 by MAP kinases is required for ubiquitination and degradation by the DCX(AMBRA1) complex. Post-translationally, ubiquitinated by the DCX(AMBRA1) complex during the transition from G1 to S cell phase, leading to its degradation. The DCX(AMBRA1) complex represents the major regulator of CCND1 stability during the G1/S transition.

It localises to the nucleus. Its subcellular location is the cytoplasm. Regulatory component of the cyclin D1-CDK4 (DC) complex that phosphorylates and inhibits members of the retinoblastoma (RB) protein family including RB1 and regulates the cell-cycle during G(1)/S transition. Phosphorylation of RB1 allows dissociation of the transcription factor E2F from the RB/E2F complex and the subsequent transcription of E2F target genes which are responsible for the progression through the G(1) phase. Hypophosphorylates RB1 in early G(1) phase. Cyclin D-CDK4 complexes are major integrators of various mitogenenic and antimitogenic signals. The chain is G1/S-specific cyclin-D1 (ccnd1) from Xenopus laevis (African clawed frog).